We begin with the raw amino-acid sequence, 91 residues long: DNA-binding protein HRL18 (91 aa).

It belongs to the bacterial histone-like protein family.

Functionally, histone-like DNA-binding protein which is capable of wrapping DNA to stabilize it, and thus to prevent its denaturation under extreme environmental conditions. The protein is DNA-binding protein HRL18 of Rhizobium leguminosarum.